Here is a 1099-residue protein sequence, read N- to C-terminus: Glutamine--fructose-6-phosphate aminotransferase [isomerizing] (1099 aa).

Residue Cys2 is the Nucleophile; for GATase activity of the active site. The Glutamine amidotransferase type-2; first part domain occupies 2–71; the sequence is CGIIGYIGND…DIDGNIGIGH (70 aa). Residues 198 to 253 enclose the HTH cro/C1-type domain; sequence LRKVREKLGLTRKDVEKLCGVKEIYIVKIETGKLESIEEERLKKLCSLYGINFEEI. The DOD-type homing endonuclease domain occupies 278 to 413; the sequence is IIGYIIGDGH…IQFLLLRFGI (136 aa). The region spanning 571–723 is the Glutamine amidotransferase type-2; second part domain; sequence SRWATHGNVC…DGDVVVIKKK (153 aa). SIS domains follow at residues 786–923 and 948–1089; these read LAKC…LLGR and TIKE…VDKP. Lys1094 (for Fru-6P isomerization activity) is an active-site residue.

This sequence in the C-terminal section; belongs to the SIS family. GFAT subfamily. In terms of assembly, homodimer. This protein undergoes a protein self splicing that involves a post-translational excision of the intervening region (intein) followed by peptide ligation.

The protein localises to the cytoplasm. It carries out the reaction D-fructose 6-phosphate + L-glutamine = D-glucosamine 6-phosphate + L-glutamate. In terms of biological role, catalyzes the first step in hexosamine metabolism, converting fructose-6P into glucosamine-6P using glutamine as a nitrogen source. The protein is Glutamine--fructose-6-phosphate aminotransferase [isomerizing] (glmS) of Methanocaldococcus jannaschii (strain ATCC 43067 / DSM 2661 / JAL-1 / JCM 10045 / NBRC 100440) (Methanococcus jannaschii).